We begin with the raw amino-acid sequence, 193 residues long: Thymidine kinase (193 aa).

Residues 15-22 (GCMYSGKT) and 87-90 (DELH) contribute to the ATP site. The active-site Proton acceptor is the E88. Residues C147, C150, C185, and C188 each contribute to the Zn(2+) site.

This sequence belongs to the thymidine kinase family. In terms of assembly, homotetramer.

It is found in the cytoplasm. The enzyme catalyses thymidine + ATP = dTMP + ADP + H(+). This chain is Thymidine kinase, found in Chloroflexus aurantiacus (strain ATCC 29366 / DSM 635 / J-10-fl).